The sequence spans 306 residues: Ornithine carbamoyltransferase (306 aa).

Carbamoyl phosphate is bound by residues 51 to 54, glutamine 78, arginine 102, and 129 to 132; these read STRT and HPCQ. L-ornithine is bound by residues asparagine 160, aspartate 223, and 227-228; that span reads SM. Carbamoyl phosphate-binding positions include 263 to 264 and arginine 291; that span reads CL.

Belongs to the aspartate/ornithine carbamoyltransferase superfamily. OTCase family.

It is found in the cytoplasm. It carries out the reaction carbamoyl phosphate + L-ornithine = L-citrulline + phosphate + H(+). Its pathway is amino-acid biosynthesis; L-arginine biosynthesis; L-arginine from L-ornithine and carbamoyl phosphate: step 1/3. Functionally, reversibly catalyzes the transfer of the carbamoyl group from carbamoyl phosphate (CP) to the N(epsilon) atom of ornithine (ORN) to produce L-citrulline. The polypeptide is Ornithine carbamoyltransferase (Trichormus variabilis (strain ATCC 29413 / PCC 7937) (Anabaena variabilis)).